The sequence spans 233 residues: Hydroxyacylglutathione hydrolase (233 aa).

Zn(2+) is bound by residues histidine 52, histidine 54, aspartate 56, histidine 57, histidine 108, aspartate 125, and histidine 163.

The protein belongs to the metallo-beta-lactamase superfamily. Glyoxalase II family. As to quaternary structure, monomer. Zn(2+) is required as a cofactor.

The enzyme catalyses an S-(2-hydroxyacyl)glutathione + H2O = a 2-hydroxy carboxylate + glutathione + H(+). Its pathway is secondary metabolite metabolism; methylglyoxal degradation; (R)-lactate from methylglyoxal: step 2/2. Functionally, thiolesterase that catalyzes the hydrolysis of S-D-lactoyl-glutathione to form glutathione and D-lactic acid. The polypeptide is Hydroxyacylglutathione hydrolase (Histophilus somni (strain 129Pt) (Haemophilus somnus)).